Consider the following 510-residue polypeptide: ATP synthase subunit alpha (510 aa).

Residue 171-178 (GDRQTGKT) participates in ATP binding.

It belongs to the ATPase alpha/beta chains family. F-type ATPases have 2 components, CF(1) - the catalytic core - and CF(0) - the membrane proton channel. CF(1) has five subunits: alpha(3), beta(3), gamma(1), delta(1), epsilon(1). CF(0) has three main subunits: a(1), b(2) and c(9-12). The alpha and beta chains form an alternating ring which encloses part of the gamma chain. CF(1) is attached to CF(0) by a central stalk formed by the gamma and epsilon chains, while a peripheral stalk is formed by the delta and b chains.

The protein localises to the cell inner membrane. It catalyses the reaction ATP + H2O + 4 H(+)(in) = ADP + phosphate + 5 H(+)(out). Produces ATP from ADP in the presence of a proton gradient across the membrane. The alpha chain is a regulatory subunit. The protein is ATP synthase subunit alpha of Phenylobacterium zucineum (strain HLK1).